The chain runs to 376 residues: Fibromodulin (376 aa).

The first 18 residues, 1-18 (MQWASILLLRGLCSLSQG), serve as a signal peptide directing secretion. Residue Gln-19 is modified to Pyrrolidone carboxylic acid. Tyr-20, Tyr-38, Tyr-53, Tyr-55, Tyr-63, and Tyr-65 each carry sulfotyrosine. The 39-residue stretch at 67 to 105 (APPPPEPRDCPQECDCPPNFPTAMYCDNRNLKYLPFVPS) folds into the LRRNT domain. LRR repeat units lie at residues 106-127 (RMKY…VFDN), 130-143 (GLLW…QITS), 156-176 (HLER…PLPR), 177-198 (SLRE…ALEG), 201-222 (NLTA…MRGL), 224-245 (SLIL…LPSA), 246-266 (LEQL…YFRG), and 269-289 (KLLY…ATNT). Asn-127 carries an N-linked (GlcNAc...) (keratan sulfate) asparagine glycan. The N-linked (GlcNAc...) (keratan sulfate) asparagine glycan is linked to Asn-166. N-linked (GlcNAc...) (keratan sulfate) asparagine glycosylation occurs at Asn-201. A glycan (N-linked (GlcNAc...) (keratan sulfate) asparagine) is linked at Asn-291. LRR repeat units lie at residues 294–315 (SLLE…NTNL) and 316–335 (ENLY…SFCT). Residues Cys-334 and Cys-367 are joined by a disulfide bond. Asn-341 carries an N-linked (GlcNAc...) asparagine glycan. The stretch at 344–367 (KLQVLRLDGNEIKRSAMPVDAPLC) is one LRR 11 repeat.

The protein belongs to the small leucine-rich proteoglycan (SLRP) family. SLRP class II subfamily. In terms of assembly, binds to type I and type II collagen. Binds keratan sulfate chains.

It is found in the secreted. The protein localises to the extracellular space. Its subcellular location is the extracellular matrix. Its function is as follows. Affects the rate of fibrils formation. May have a primary role in collagen fibrillogenesis. The polypeptide is Fibromodulin (Fmod) (Rattus norvegicus (Rat)).